A 366-amino-acid polypeptide reads, in one-letter code: Alanine racemase (366 aa).

K40 serves as the catalytic Proton acceptor; specific for D-alanine. The residue at position 40 (K40) is an N6-(pyridoxal phosphate)lysine. A substrate-binding site is contributed by R136. Y263 (proton acceptor; specific for L-alanine) is an active-site residue. Residue M310 participates in substrate binding.

This sequence belongs to the alanine racemase family. It depends on pyridoxal 5'-phosphate as a cofactor.

It catalyses the reaction L-alanine = D-alanine. The protein operates within amino-acid biosynthesis; D-alanine biosynthesis; D-alanine from L-alanine: step 1/1. Functionally, catalyzes the interconversion of L-alanine and D-alanine. May also act on other amino acids. This Streptococcus equi subsp. zooepidemicus (strain H70) protein is Alanine racemase (alr).